Consider the following 150-residue polypeptide: 3-dehydroquinate dehydratase (150 aa).

Tyrosine 26 (proton acceptor) is an active-site residue. Substrate contacts are provided by asparagine 77, histidine 83, and aspartate 90. Histidine 103 serves as the catalytic Proton donor. Residues leucine 104–serine 105 and arginine 114 each bind substrate.

Belongs to the type-II 3-dehydroquinase family. Homododecamer.

It carries out the reaction 3-dehydroquinate = 3-dehydroshikimate + H2O. It participates in metabolic intermediate biosynthesis; chorismate biosynthesis; chorismate from D-erythrose 4-phosphate and phosphoenolpyruvate: step 3/7. In terms of biological role, catalyzes a trans-dehydration via an enolate intermediate. The sequence is that of 3-dehydroquinate dehydratase from Vibrio cholerae serotype O1 (strain ATCC 39541 / Classical Ogawa 395 / O395).